A 153-amino-acid polypeptide reads, in one-letter code: Endoribonuclease YbeY (153 aa).

Positions 118, 122, and 128 each coordinate Zn(2+).

It belongs to the endoribonuclease YbeY family. The cofactor is Zn(2+).

It is found in the cytoplasm. In terms of biological role, single strand-specific metallo-endoribonuclease involved in late-stage 70S ribosome quality control and in maturation of the 3' terminus of the 16S rRNA. The protein is Endoribonuclease YbeY of Clostridioides difficile (strain 630) (Peptoclostridium difficile).